Reading from the N-terminus, the 478-residue chain is Aspartyl/glutamyl-tRNA(Asn/Gln) amidotransferase subunit B (478 aa).

The protein belongs to the GatB/GatE family. GatB subfamily. In terms of assembly, heterotrimer of A, B and C subunits.

It catalyses the reaction L-glutamyl-tRNA(Gln) + L-glutamine + ATP + H2O = L-glutaminyl-tRNA(Gln) + L-glutamate + ADP + phosphate + H(+). The catalysed reaction is L-aspartyl-tRNA(Asn) + L-glutamine + ATP + H2O = L-asparaginyl-tRNA(Asn) + L-glutamate + ADP + phosphate + 2 H(+). In terms of biological role, allows the formation of correctly charged Asn-tRNA(Asn) or Gln-tRNA(Gln) through the transamidation of misacylated Asp-tRNA(Asn) or Glu-tRNA(Gln) in organisms which lack either or both of asparaginyl-tRNA or glutaminyl-tRNA synthetases. The reaction takes place in the presence of glutamine and ATP through an activated phospho-Asp-tRNA(Asn) or phospho-Glu-tRNA(Gln). The polypeptide is Aspartyl/glutamyl-tRNA(Asn/Gln) amidotransferase subunit B (Alkalilimnicola ehrlichii (strain ATCC BAA-1101 / DSM 17681 / MLHE-1)).